We begin with the raw amino-acid sequence, 185 residues long: Urease accessory protein UreE (185 aa).

The segment at 153–185 (LRANSAQGHGHSHSHSHDHHGYHHHGDGHWHKH) is disordered. Positions 162 to 175 (GHSHSHSHDHHGYH) are enriched in basic residues. Basic and acidic residues predominate over residues 176–185 (HHGDGHWHKH).

This sequence belongs to the UreE family.

It is found in the cytoplasm. Involved in urease metallocenter assembly. Binds nickel. Probably functions as a nickel donor during metallocenter assembly. The polypeptide is Urease accessory protein UreE (Haemophilus influenzae (strain 86-028NP)).